A 624-amino-acid polypeptide reads, in one-letter code: Polycomb group protein EMF2A (624 aa).

The C2H2-type zinc-finger motif lies at 338–359 (CPFCLVRCGNFKGLECHMTSSH). The tract at residues 420–445 (DAHIMESGSPEETQAESEDDVQEENE) is disordered. The segment covering 432–445 (TQAESEDDVQEENE) has biased composition (acidic residues). A VEFS-box region spans residues 474-609 (LSANRADPRN…SARTMDTCNR (136 aa)).

Belongs to the VEFS (VRN2-EMF2-FIS2-SU(Z)12) family. As to quaternary structure, component of the polycomb repressive complex 2 (PRC2), which methylates 'Lys-27' residues of histone H3 (H3K27me3), leading to transcriptional repression of the affected target gene. In terms of tissue distribution, widely expressed. Highly expressed in shoot apical meristem and inflorescence meristem. Expressed in roots, leaves and immature seeds.

Polycomb group (PcG) protein. PcG proteins act by forming multiprotein complexes, which are required to maintain the transcriptionally repressive state of homeotic genes throughout development. PcG proteins are not required to initiate repression, but to maintain it during later stages of development. They act via the methylation of histones, rendering chromatin heritably changed in its expressibility. This Oryza sativa subsp. japonica (Rice) protein is Polycomb group protein EMF2A.